Here is a 377-residue protein sequence, read N- to C-terminus: Erythronate-4-phosphate dehydrogenase (377 aa).

Residues Ser45 and Thr67 each coordinate substrate. Residues 127-128 (QV), Asp147, and Thr176 contribute to the NAD(+) site. Arg209 is an active-site residue. Residue Asp233 coordinates NAD(+). Glu238 is an active-site residue. His255 functions as the Proton donor in the catalytic mechanism. Position 258 (Gly258) interacts with NAD(+). Residue Tyr259 participates in substrate binding.

The protein belongs to the D-isomer specific 2-hydroxyacid dehydrogenase family. PdxB subfamily. As to quaternary structure, homodimer.

The protein resides in the cytoplasm. The catalysed reaction is 4-phospho-D-erythronate + NAD(+) = (R)-3-hydroxy-2-oxo-4-phosphooxybutanoate + NADH + H(+). Its pathway is cofactor biosynthesis; pyridoxine 5'-phosphate biosynthesis; pyridoxine 5'-phosphate from D-erythrose 4-phosphate: step 2/5. Catalyzes the oxidation of erythronate-4-phosphate to 3-hydroxy-2-oxo-4-phosphonooxybutanoate. This is Erythronate-4-phosphate dehydrogenase from Vibrio atlanticus (strain LGP32) (Vibrio splendidus (strain Mel32)).